Consider the following 315-residue polypeptide: MILKNISLLIILFFSISTFSAGHSLKNISITVVAPATGADNKTLSDLKNINGLNLQISSKCFAKGKLPFLASSDEVRFNCLRDALFDESDNIVWSLRGGYGSARIIPDLLKLSKPNKEKFFIGYSDITALHLFLSQEWGWKTIHGSNIADLLKPEQDQGNFTKLAEILKGKVKQVTIDNLVPLNDIAKSSDLVNGKLTGGNLTMVQTSIGTSWQIKTKGKILFLEDVNVVPFRLDRELLHLKQAGLLEDVKAIIFGSFGKDLDATMLVLRNFADSLDIPVFKTNRFGHEKINDPIIYNTNSKIIKSKEFKLVMGV.

Catalysis depends on Ser-125, which acts as the Nucleophile. Residues Glu-225 and His-288 each act as charge relay system in the active site.

The protein belongs to the peptidase S66 family.

This chain is Putative carboxypeptidase RC0549, found in Rickettsia conorii (strain ATCC VR-613 / Malish 7).